We begin with the raw amino-acid sequence, 388 residues long: Succinate--CoA ligase [ADP-forming] subunit beta (388 aa).

Residues 9–244 (KQLFAEFGLP…PSQEDEREAH (236 aa)) form the ATP-grasp domain. ATP contacts are provided by residues Lys46, 53-55 (GRG), Glu99, Ser102, and Glu107. Positions 199 and 213 each coordinate Mg(2+). Residues Asn264 and 321 to 323 (GIV) contribute to the substrate site.

The protein belongs to the succinate/malate CoA ligase beta subunit family. Heterotetramer of two alpha and two beta subunits. Mg(2+) is required as a cofactor.

It catalyses the reaction succinate + ATP + CoA = succinyl-CoA + ADP + phosphate. The catalysed reaction is GTP + succinate + CoA = succinyl-CoA + GDP + phosphate. Its pathway is carbohydrate metabolism; tricarboxylic acid cycle; succinate from succinyl-CoA (ligase route): step 1/1. In terms of biological role, succinyl-CoA synthetase functions in the citric acid cycle (TCA), coupling the hydrolysis of succinyl-CoA to the synthesis of either ATP or GTP and thus represents the only step of substrate-level phosphorylation in the TCA. The beta subunit provides nucleotide specificity of the enzyme and binds the substrate succinate, while the binding sites for coenzyme A and phosphate are found in the alpha subunit. The protein is Succinate--CoA ligase [ADP-forming] subunit beta of Vibrio campbellii (strain ATCC BAA-1116).